The following is a 423-amino-acid chain: MAKTIQAIRGMNDCSPTESPLWQWVEGKVRSVLQNYGYSEVRMPIVESTPLFARAIGEVTDVVSKEMYTFWDNDEQLTLRPEGTAGCVRAAIEHGWIYNQEQRLWYMGPMFRHERPQKGRYRQFHQAGVEVFGIPNPEIDAELIMLTARLWKELGIAEHVTLQLNSIGSLEARKNYRSALVAFLQQHVDLLSEEEKERLEKNPLRILDTKNQALQEVLNDAPKLLAYLDDDSREHFAQLCALLDAVGIQYEVNPKLVRGLDYYNKTVFEWVTSALGAQGTVCGGGRYDGLVEQLGGHATTGVGFAMGLERLVLLVQEVNQSIRLPSAVDIYVVYQGEGTTLAAFQLAETLRTELPQLRVMTHCSGGNFKKQFKRADKSGATLALVIGESEVQNQQVVVKHLLGGAEQQTLALDDIVDYIKNNF.

The protein belongs to the class-II aminoacyl-tRNA synthetase family. As to quaternary structure, homodimer.

The protein localises to the cytoplasm. The enzyme catalyses tRNA(His) + L-histidine + ATP = L-histidyl-tRNA(His) + AMP + diphosphate + H(+). In Pasteurella multocida (strain Pm70), this protein is Histidine--tRNA ligase (hisS).